The chain runs to 1089 residues: Platelet-derived growth factor receptor alpha (1089 aa).

An N-terminal signal peptide occupies residues 1–24 (MGTSHQVFLVLSCLLTGPGLISCQ). Ig-like C2-type domains lie at 25-113 (LLLP…SEIE), 117-201 (IYIY…FKTS), 202-306 (EFNV…KRVT), 319-410 (PTFG…FELS), and 414-517 (PASI…LKLV). Residues 25-528 (LLLPSILPNE…PTLRSELTVA (504 aa)) lie on the Extracellular side of the membrane. N-linked (GlcNAc...) asparagine glycosylation is found at N42, N76, N89, N103, and N179. Residues C49 and C100 are joined by a disulfide bond. Intrachain disulfides connect C150–C189 and C235–C290. 5 N-linked (GlcNAc...) asparagine glycosylation sites follow: N353, N359, N458, N468, and N506. Cysteines 435 and 501 form a disulfide. The helical transmembrane segment at 529 to 549 (AAVLVLLVIVIVSLIVLVVIW) threads the bilayer. Residues 550–1089 (KQKPRYEIRW…SSDLVEDSFL (540 aa)) are Cytoplasmic-facing. Y572 and Y574 each carry phosphotyrosine; by autocatalysis. The Protein kinase domain maps to 593–954 (LVLGRILGSG…HLSEIVENLL (362 aa)). ATP-binding positions include 599-607 (LGSGAFGKV) and K627. A phosphotyrosine; by autocatalysis mark is found at Y720, Y731, Y742, Y754, Y762, and Y768. D818 acts as the Proton acceptor in catalysis. Residues Y849, Y988, and Y1018 each carry the phosphotyrosine; by autocatalysis modification. The interval 1018–1089 (YIIPLPDIDP…SSDLVEDSFL (72 aa)) is disordered. The segment covering 1041-1059 (SSQTSEESAIETGSSSSTF) has biased composition (polar residues). Acidic residues predominate over residues 1065–1089 (ETIEDIDMMDDIGIDSSDLVEDSFL).

Belongs to the protein kinase superfamily. Tyr protein kinase family. CSF-1/PDGF receptor subfamily. As to quaternary structure, interacts with homodimeric PDGFA, PDGFB and PDGFC, and with heterodimers formed by PDGFA and PDGFB. Monomer in the absence of bound ligand. Interaction with dimeric PDGFA, PDGFB and/or PDGFC leads to receptor dimerization, where both PDGFRA homodimers and heterodimers with PDGFRB are observed. Interacts (tyrosine phosphorylated) with SHB (via SH2 domain). Interacts (tyrosine phosphorylated) with SHF (via SH2 domain). Interacts (tyrosine phosphorylated) with SRC (via SH2 domain). Interacts (tyrosine phosphorylated) with PIK3R1. Interacts (tyrosine phosphorylated) with PLCG1 (via SH2 domain). Interacts (tyrosine phosphorylated) with CRK, GRB2 and GRB7. Interacts with CD248; this interaction promotes PDGF receptor signaling pathway. Post-translationally, ubiquitinated, leading to its internalization and degradation. In terms of processing, autophosphorylated on tyrosine residues upon ligand binding. Autophosphorylation occurs in trans, i.e. one subunit of the dimeric receptor phosphorylates tyrosine residues on the other subunit. Phosphorylation at Tyr-731 and Tyr-742 is important for interaction with PIK3R1. Phosphorylation at Tyr-720 and Tyr-754 is important for interaction with PTPN11. Phosphorylation at Tyr-762 is important for interaction with CRK. Phosphorylation at Tyr-572 and Tyr-574 is important for interaction with SRC and SRC family members. Phosphorylation at Tyr-988 and Tyr-1018 is important for interaction with PLCG1. Focally expressed in cortical interstitial cells and highly expressed in the interstitium of the papillary region. Also expressed by adventitial cells in arterial vessels. Up-regulated in areas of renal fibrosis. In mice with unilateral ureteral obstruction, expression in cortical interstitial cells becomes prominent at day 4 which increases progressively until day 14.

The protein resides in the cell membrane. It is found in the cell projection. The protein localises to the cilium. Its subcellular location is the golgi apparatus. The catalysed reaction is L-tyrosyl-[protein] + ATP = O-phospho-L-tyrosyl-[protein] + ADP + H(+). Present in an inactive conformation in the absence of bound ligand. Binding of PDGFA and/or PDGFB leads to dimerization and activation by autophosphorylation on tyrosine residues. Inhibited by imatinib, nilotinib and sorafenib. Functionally, tyrosine-protein kinase that acts as a cell-surface receptor for PDGFA, PDGFB and PDGFC and plays an essential role in the regulation of embryonic development, cell proliferation, survival and chemotaxis. Depending on the context, promotes or inhibits cell proliferation and cell migration. Plays an important role in the differentiation of bone marrow-derived mesenchymal stem cells. Required for normal skeleton development and cephalic closure during embryonic development. Required for normal development of the mucosa lining the gastrointestinal tract, and for recruitment of mesenchymal cells and normal development of intestinal villi. Plays a role in cell migration and chemotaxis in wound healing. Plays a role in platelet activation, secretion of agonists from platelet granules, and in thrombin-induced platelet aggregation. Binding of its cognate ligands - homodimeric PDGFA, homodimeric PDGFB, heterodimers formed by PDGFA and PDGFB or homodimeric PDGFC -leads to the activation of several signaling cascades; the response depends on the nature of the bound ligand and is modulated by the formation of heterodimers between PDGFRA and PDGFRB. Phosphorylates PIK3R1, PLCG1, and PTPN11. Activation of PLCG1 leads to the production of the cellular signaling molecules diacylglycerol and inositol 1,4,5-trisphosphate, mobilization of cytosolic Ca(2+) and the activation of protein kinase C. Phosphorylates PIK3R1, the regulatory subunit of phosphatidylinositol 3-kinase, and thereby mediates activation of the AKT1 signaling pathway. Mediates activation of HRAS and of the MAP kinases MAPK1/ERK2 and/or MAPK3/ERK1. Promotes activation of STAT family members STAT1, STAT3 and STAT5A and/or STAT5B. Receptor signaling is down-regulated by protein phosphatases that dephosphorylate the receptor and its down-stream effectors, and by rapid internalization of the activated receptor. The protein is Platelet-derived growth factor receptor alpha (Pdgfra) of Mus musculus (Mouse).